The sequence spans 289 residues: Melatonin receptor type 1B (289 aa).

At glycine 1–asparagine 2 the chain is on the cytoplasmic side. Residues alanine 3–valine 23 form a helical membrane-spanning segment. The Extracellular portion of the chain corresponds to leucine 24–valine 41. A disulfide bond links cysteine 39 and cysteine 116. A helical membrane pass occupies residues serine 42–isoleucine 62. Over asparagine 63–tryptophan 81 the chain is Cytoplasmic. Residues asparagine 82–phenylalanine 102 form a helical membrane-spanning segment. At phenylalanine 103–tyrosine 126 the chain is on the extracellular side. A helical transmembrane segment spans residues threonine 127–leucine 147. Topologically, residues arginine 148 to methionine 179 are cytoplasmic. Residues phenylalanine 180–valine 200 traverse the membrane as a helical segment. At alanine 201 to glutamate 213 the chain is on the extracellular side. The helical transmembrane segment at tryptophan 214–tyrosine 234 threads the bilayer. The Cytoplasmic segment spans residues glycine 235–leucine 289. Positions lysine 264–leucine 289 are disordered.

The protein belongs to the G-protein coupled receptor 1 family. As to expression, brain and kidney, with trace levels in lungs.

It is found in the cell membrane. Its function is as follows. High affinity receptor for melatonin. The activity of this receptor is mediated by pertussis toxin sensitive G proteins that inhibits adenylate cyclase activity. The protein is Melatonin receptor type 1B of Gallus gallus (Chicken).